Here is a 765-residue protein sequence, read N- to C-terminus: 5-methyltetrahydropteroyltriglutamate--homocysteine methyltransferase (765 aa).

5-methyltetrahydropteroyltri-L-glutamate is bound by residues 18–21 and Lys-114; that span reads REWK. L-homocysteine-binding positions include 437-439 and Glu-490; that span reads IGS. L-methionine-binding positions include 437 to 439 and Glu-490; that span reads IGS. Trp-567 contributes to the 5-methyltetrahydropteroyltri-L-glutamate binding site. Asp-605 contributes to the L-homocysteine binding site. Asp-605 provides a ligand contact to L-methionine. Glu-611 lines the 5-methyltetrahydropteroyltri-L-glutamate pocket. The Zn(2+) site is built by His-647, Cys-649, and Glu-671. His-700 functions as the Proton donor in the catalytic mechanism. Cys-732 contributes to the Zn(2+) binding site.

The protein belongs to the vitamin-B12 independent methionine synthase family. Zn(2+) is required as a cofactor.

The enzyme catalyses 5-methyltetrahydropteroyltri-L-glutamate + L-homocysteine = tetrahydropteroyltri-L-glutamate + L-methionine. It participates in amino-acid biosynthesis; L-methionine biosynthesis via de novo pathway; L-methionine from L-homocysteine (MetE route): step 1/1. Catalyzes the transfer of a methyl group from 5-methyltetrahydrofolate to homocysteine resulting in methionine formation. The protein is 5-methyltetrahydropteroyltriglutamate--homocysteine methyltransferase of Listeria welshimeri serovar 6b (strain ATCC 35897 / DSM 20650 / CCUG 15529 / CIP 8149 / NCTC 11857 / SLCC 5334 / V8).